A 139-amino-acid chain; its full sequence is Large ribosomal subunit protein bL17 (139 aa).

A disordered region spans residues 120-139 (EDAKGRDSGPTQDNSEAEAA).

As to quaternary structure, part of the 50S ribosomal subunit. Contacts protein L32. May be methylated thrice, on undetermined residues.

In Rhodopseudomonas palustris (strain ATCC BAA-98 / CGA009), this protein is Large ribosomal subunit protein bL17.